We begin with the raw amino-acid sequence, 520 residues long: Amine oxidase [flavin-containing] B (520 aa).

Position 2 is an N-acetylserine (Ser2). The Cytoplasmic portion of the chain corresponds to 2-489 (SNKCDVIVVG…TFLERHLPSV (488 aa)). Position 52 is an N6-acetyllysine (Lys52). At Cys397 the chain carries S-8alpha-FAD cysteine. The helical; Anchor for type IV membrane protein transmembrane segment at 490–516 (PGLLKLLGLTTILSATALGFLAHKKGL) threads the bilayer. Residues 517-520 (FVRF) lie on the Mitochondrial intermembrane side of the membrane.

The protein belongs to the flavin monoamine oxidase family. As to quaternary structure, monomer, homo- or heterodimer (containing two subunits of similar size). Each subunit contains a covalently bound flavin. Enzymatically active as monomer. FAD is required as a cofactor.

The protein resides in the mitochondrion outer membrane. The enzyme catalyses a secondary aliphatic amine + O2 + H2O = a primary amine + an aldehyde + H2O2. It catalyses the reaction (R)-adrenaline + O2 + H2O = (R)-3,4-dihydroxymandelaldehyde + methylamine + H2O2. It carries out the reaction a primary methyl amine + O2 + H2O = an aldehyde + H2O2 + NH4(+). The catalysed reaction is dopamine + O2 + H2O = 3,4-dihydroxyphenylacetaldehyde + H2O2 + NH4(+). The enzyme catalyses tyramine + O2 + H2O = (4-hydroxyphenyl)acetaldehyde + H2O2 + NH4(+). It catalyses the reaction (R)-noradrenaline + O2 + H2O = (R)-3,4-dihydroxymandelaldehyde + H2O2 + NH4(+). It carries out the reaction benzylamine + O2 + H2O = benzaldehyde + H2O2 + NH4(+). The catalysed reaction is 2-phenylethylamine + O2 + H2O = 2-phenylacetaldehyde + H2O2 + NH4(+). The enzyme catalyses N-acetylputrescine + O2 + H2O = 4-acetamidobutanal + H2O2 + NH4(+). Its function is as follows. Catalyzes the oxidative deamination of primary and some secondary amines such as neurotransmitters, and exogenous amines including the tertiary amine, neurotoxin 1-methyl-4-phenyl-1,2,3,6-tetrahydropyridine (MPTP), with concomitant reduction of oxygen to hydrogen peroxide and participates in the metabolism of neuroactive and vasoactive amines in the central nervous system and peripheral tissues. Preferentially degrades benzylamine and phenylethylamine. The protein is Amine oxidase [flavin-containing] B of Rattus norvegicus (Rat).